A 260-amino-acid chain; its full sequence is Ribosomal RNA small subunit methyltransferase A (260 aa).

Residues N16, L18, G43, E64, D86, and N108 each coordinate S-adenosyl-L-methionine.

The protein belongs to the class I-like SAM-binding methyltransferase superfamily. rRNA adenine N(6)-methyltransferase family. RsmA subfamily.

The protein localises to the cytoplasm. The enzyme catalyses adenosine(1518)/adenosine(1519) in 16S rRNA + 4 S-adenosyl-L-methionine = N(6)-dimethyladenosine(1518)/N(6)-dimethyladenosine(1519) in 16S rRNA + 4 S-adenosyl-L-homocysteine + 4 H(+). Its function is as follows. Specifically dimethylates two adjacent adenosines (A1518 and A1519) in the loop of a conserved hairpin near the 3'-end of 16S rRNA in the 30S particle. May play a critical role in biogenesis of 30S subunits. The chain is Ribosomal RNA small subunit methyltransferase A from Buchnera aphidicola subsp. Baizongia pistaciae (strain Bp).